The sequence spans 178 residues: Large ribosomal subunit protein uL6 (178 aa).

It belongs to the universal ribosomal protein uL6 family. In terms of assembly, part of the 50S ribosomal subunit.

Functionally, this protein binds to the 23S rRNA, and is important in its secondary structure. It is located near the subunit interface in the base of the L7/L12 stalk, and near the tRNA binding site of the peptidyltransferase center. The sequence is that of Large ribosomal subunit protein uL6 from Aliarcobacter butzleri (strain RM4018) (Arcobacter butzleri).